The sequence spans 239 residues: tRNA (guanine-N(7)-)-methyltransferase (239 aa).

S-adenosyl-L-methionine contacts are provided by E69, E94, D121, and D144. Residue D144 is part of the active site. Substrate is bound at residue K148. The tract at residues R150–R155 is interaction with RNA. Residues D180 and T217–E220 contribute to the substrate site.

This sequence belongs to the class I-like SAM-binding methyltransferase superfamily. TrmB family. As to quaternary structure, monomer.

The catalysed reaction is guanosine(46) in tRNA + S-adenosyl-L-methionine = N(7)-methylguanosine(46) in tRNA + S-adenosyl-L-homocysteine. Its pathway is tRNA modification; N(7)-methylguanine-tRNA biosynthesis. In terms of biological role, catalyzes the formation of N(7)-methylguanine at position 46 (m7G46) in tRNA. The sequence is that of tRNA (guanine-N(7)-)-methyltransferase from Salmonella paratyphi A (strain ATCC 9150 / SARB42).